The sequence spans 338 residues: Lipoate-protein ligase A (338 aa).

In terms of domain architecture, BPL/LPL catalytic spans 29-216; it reads PATQRVLFLW…AFFAHYGERV (188 aa). ATP is bound by residues R71, 76–79, and K134; that span reads GAVF. (R)-lipoate is bound at residue K134.

Belongs to the LplA family. As to quaternary structure, monomer.

It is found in the cytoplasm. The catalysed reaction is L-lysyl-[lipoyl-carrier protein] + (R)-lipoate + ATP = N(6)-[(R)-lipoyl]-L-lysyl-[lipoyl-carrier protein] + AMP + diphosphate + H(+). It participates in protein modification; protein lipoylation via exogenous pathway; protein N(6)-(lipoyl)lysine from lipoate: step 1/2. It functions in the pathway protein modification; protein lipoylation via exogenous pathway; protein N(6)-(lipoyl)lysine from lipoate: step 2/2. Functionally, catalyzes both the ATP-dependent activation of exogenously supplied lipoate to lipoyl-AMP and the transfer of the activated lipoyl onto the lipoyl domains of lipoate-dependent enzymes. This Shigella boydii serotype 18 (strain CDC 3083-94 / BS512) protein is Lipoate-protein ligase A.